We begin with the raw amino-acid sequence, 206 residues long: Homoserine/homoserine lactone efflux protein (206 aa).

6 consecutive transmembrane segments (helical) span residues 5–25 (WWFA…SGAI), 45–65 (GLQT…GTLF), 68–88 (SLIA…WLGI), 117–137 (FVNL…PQFI), 148–168 (LILG…YATL), and 182–202 (MKAL…LLAS).

This sequence belongs to the Rht family.

It localises to the cell membrane. In terms of biological role, conducts the efflux of homoserine and homoserine lactone. The chain is Homoserine/homoserine lactone efflux protein (rhtB) from Salmonella typhi.